Reading from the N-terminus, the 459-residue chain is Putrescine aminotransferase (459 aa).

Pyridoxal 5'-phosphate is bound by residues 150–151 (GT) and Q274. The residue at position 300 (K300) is an N6-(pyridoxal phosphate)lysine. Residue T332 participates in pyridoxal 5'-phosphate binding.

This sequence belongs to the class-III pyridoxal-phosphate-dependent aminotransferase family. Putrescine aminotransferase subfamily. Pyridoxal 5'-phosphate serves as cofactor.

It carries out the reaction an alkane-alpha,omega-diamine + 2-oxoglutarate = an omega-aminoaldehyde + L-glutamate. The catalysed reaction is putrescine + 2-oxoglutarate = 1-pyrroline + L-glutamate + H2O. It catalyses the reaction cadaverine + 2-oxoglutarate = 5-aminopentanal + L-glutamate. It participates in amine and polyamine degradation; putrescine degradation; 4-aminobutanal from putrescine (transaminase route): step 1/1. Functionally, catalyzes the aminotransferase reaction from putrescine to 2-oxoglutarate, leading to glutamate and 4-aminobutanal, which spontaneously cyclizes to form 1-pyrroline. This is the first step in one of two pathways for putrescine degradation, where putrescine is converted into 4-aminobutanoate (gamma-aminobutyrate or GABA) via 4-aminobutanal. Also functions as a cadaverine transaminase in a a L-lysine degradation pathway to succinate that proceeds via cadaverine, glutarate and L-2-hydroxyglutarate. In Klebsiella pneumoniae subsp. pneumoniae (strain ATCC 700721 / MGH 78578), this protein is Putrescine aminotransferase.